Reading from the N-terminus, the 1246-residue chain is Stromal processing peptidase, chloroplastic (1246 aa).

The transit peptide at 1 to 136 (MASFPSPPLA…AKIRRRHVLH (136 aa)) directs the protein to the chloroplast. Residue His228 participates in Zn(2+) binding. Glu231 (proton acceptor) is an active-site residue. A Zn(2+)-binding site is contributed by His232. The active site involves Glu302. Zn(2+) is bound at residue Glu309.

Belongs to the peptidase M16 family. The cofactor is Zn(2+).

Its subcellular location is the plastid. The protein localises to the chloroplast stroma. Its function is as follows. Cleaves presequences (transit peptides) from chloroplastic protein precursors. Initially recognizes a precursor by binding to the C-terminus of its transit peptide and then removes the transit peptide in a single endoproteolytic step. In a next step, pursues the cleavage of transit peptide to a subfragment form. This chain is Stromal processing peptidase, chloroplastic, found in Oryza sativa subsp. japonica (Rice).